Reading from the N-terminus, the 501-residue chain is Carotenoid cleavage oxygenase (501 aa).

Positions 162, 211, 314, and 494 each coordinate Fe cation.

The protein belongs to the carotenoid oxygenase family. Fe(2+) is required as a cofactor.

In terms of biological role, catalyzes the oxidative cleavage of several carotenoids and apocarotenoids in vitro. The chain is Carotenoid cleavage oxygenase from Mycobacterium tuberculosis (strain CDC 1551 / Oshkosh).